The chain runs to 181 residues: Major urinary protein 11 (181 aa).

A signal peptide spans 1 to 19 (MKMLLLLLCLGLTLVCVHA). A disulfide bond links C83 and C176.

The protein belongs to the calycin superfamily. Lipocalin family.

It is found in the secreted. In terms of biological role, major urinary proteins (Mups) bind pheromones, and thus stabilize them to allow slow release into the air from urine marks. May protect pheromones from oxidation. May also act as pheromones themselves. In this context, they play a role in the regulation of social behaviors, such as aggression, mating, pup-suckling, territory establishment and dominance. Binds the pheromone analog 2-sec-butyl-4,5-dihydrothiazole (SBT) in vitro. The chain is Major urinary protein 11 from Mus musculus (Mouse).